A 348-amino-acid polypeptide reads, in one-letter code: MSKQTLILLYGGRSAEREVSVLSAESVMRAVDYNAFEVKTYFITQSGDFIKTQEFIETPGDDEKLMTNDTVEASQAIKPSDIYEEDAVVFPVLHGPMGEDGSIQGFLETLKLPYVGTNVLSSSVAMDKIMTKRILEVAGVPQVAYTVYIEGEDLEAAVAETLEKLTFPVFVKPANMGSSVGISKAENESELRSAIDLALKYDSRILIEQGVVAREIEVGILGNTTVKTTDPGEVVKDVAFYDYQAKYIDNKITMDIPARVPVEVMTQMRAYAAKAFRALGGCGLARCDFFLTEDGAIYLNELNTMPGFTQWSMYPLLWENMGLSYSDIIKELVVLGQEMFDKRESHLI.

The ATP-grasp domain maps to 132 to 334 (KRILEVAGVP…YSDIIKELVV (203 aa)). 162-217 (LEKLTFPVFVKPANMGSSVGISKAENESELRSAIDLALKYDSRILIEQGVVAREIE) serves as a coordination point for ATP. The Mg(2+) site is built by Asp288, Glu301, and Asn303.

It belongs to the D-alanine--D-alanine ligase family. It depends on Mg(2+) as a cofactor. The cofactor is Mn(2+).

It localises to the cytoplasm. It carries out the reaction 2 D-alanine + ATP = D-alanyl-D-alanine + ADP + phosphate + H(+). It participates in cell wall biogenesis; peptidoglycan biosynthesis. Cell wall formation. The chain is D-alanine--D-alanine ligase from Streptococcus thermophilus (strain CNRZ 1066).